The chain runs to 463 residues: Cytoplasmic tRNA 2-thiolation protein 2 (463 aa).

This sequence belongs to the CTU2/NCS2 family.

It is found in the cytoplasm. The protein operates within tRNA modification; 5-methoxycarbonylmethyl-2-thiouridine-tRNA biosynthesis. In terms of biological role, plays a central role in 2-thiolation of mcm(5)S(2)U at tRNA wobble positions of tRNA(Lys), tRNA(Glu) and tRNA(Gln). May act by forming a heterodimer with NCS6 that ligates sulfur from thiocarboxylated URM1 onto the uridine of tRNAs at wobble position. Prior mcm(5) tRNA modification by the elongator complex is required for 2-thiolation. May also be involved in protein urmylation. The polypeptide is Cytoplasmic tRNA 2-thiolation protein 2 (Kluyveromyces lactis (strain ATCC 8585 / CBS 2359 / DSM 70799 / NBRC 1267 / NRRL Y-1140 / WM37) (Yeast)).